We begin with the raw amino-acid sequence, 268 residues long: Zinc transporter ZupT (268 aa).

Transmembrane regions (helical) follow at residues 5–25 (ILFA…GSLI), 36–56 (VLTI…MIEI), 75–95 (VVTV…DKLI), 124–144 (MGLF…LATF), 157–177 (IAVA…APIF), 187–207 (FILS…GYFL), 211–231 (FFSP…MVYI), and 248–268 (FAIG…LLFT). 2 residues coordinate Fe(2+): Asn-136 and Glu-139. Zn(2+)-binding residues include Glu-139 and His-164. Residues Asn-165, Glu-168, and Glu-197 each contribute to the Fe(2+) site. A Zn(2+)-binding site is contributed by Glu-168.

It belongs to the ZIP transporter (TC 2.A.5) family. ZupT subfamily.

The protein resides in the cell membrane. It carries out the reaction Zn(2+)(in) = Zn(2+)(out). Functionally, mediates zinc uptake. May also transport other divalent cations. This Chlorobium chlorochromatii (strain CaD3) protein is Zinc transporter ZupT.